We begin with the raw amino-acid sequence, 293 residues long: AKT-interacting protein (293 aa).

Positions Met-1–Ser-11 are enriched in polar residues. The segment at Met-1–Thr-63 is disordered. The segment covering Lys-14 to Leu-23 has biased composition (basic and acidic residues). Residue Ser-30 is modified to Phosphoserine. The 149-residue stretch at Tyr-74–Ala-222 folds into the UBC core domain. A compositionally biased stretch (basic and acidic residues) spans Met-253–Asn-265. The interval Met-253–Thr-293 is disordered.

It belongs to the ubiquitin-conjugating enzyme family. FTS subfamily. As to quaternary structure, component of the FTS/Hook/FHIP complex (FHF complex), composed of AKTIP/FTS, FHIP1B, and one or more members of the Hook family of proteins HOOK1, HOOK2, and HOOK3. Interacts directly with HOOK1, HOOK2 and HOOK3. The FHF complex associates with the homotypic vesicular sorting complex (the HOPS complex). Also interacts with AKT1. May interact with FHIP1A.

Its subcellular location is the cytoplasm. The protein localises to the cell membrane. Component of the FTS/Hook/FHIP complex (FHF complex). The FHF complex may function to promote vesicle trafficking and/or fusion via the homotypic vesicular protein sorting complex (the HOPS complex). Regulates apoptosis by enhancing phosphorylation and activation of AKT1. Increases release of TNFSF6 via the AKT1/GSK3B/NFATC1 signaling cascade. FHF complex promotes the distribution of AP-4 complex to the perinuclear area of the cell. The chain is AKT-interacting protein (AKTIP) from Pongo abelii (Sumatran orangutan).